We begin with the raw amino-acid sequence, 398 residues long: Argininosuccinate synthase (398 aa).

ATP is bound at residue 9–17; it reads AYSGGLDTS. Tyr85 contacts L-citrulline. ATP is bound at residue Gly115. L-aspartate-binding residues include Thr117, Asn121, and Asp122. L-citrulline is bound at residue Asn121. L-citrulline-binding residues include Arg125, Ser173, Glu258, and Tyr270.

This sequence belongs to the argininosuccinate synthase family. Type 1 subfamily. Homotetramer.

The protein resides in the cytoplasm. The catalysed reaction is L-citrulline + L-aspartate + ATP = 2-(N(omega)-L-arginino)succinate + AMP + diphosphate + H(+). It participates in amino-acid biosynthesis; L-arginine biosynthesis; L-arginine from L-ornithine and carbamoyl phosphate: step 2/3. The chain is Argininosuccinate synthase from Streptococcus pneumoniae (strain ATCC BAA-255 / R6).